A 274-amino-acid polypeptide reads, in one-letter code: Nitrogenase iron protein (274 aa).

Residue 8 to 15 participates in ATP binding; it reads GKGGIGKS. Residue Cys-94 participates in [4Fe-4S] cluster binding. Arg-97 carries the ADP-ribosylarginine; by dinitrogenase reductase ADP-ribosyltransferase modification. Cys-131 serves as a coordination point for [4Fe-4S] cluster.

Belongs to the NifH/BchL/ChlL family. In terms of assembly, homodimer. [4Fe-4S] cluster serves as cofactor. The reversible ADP-ribosylation of Arg-97 inactivates the nitrogenase reductase and regulates nitrogenase activity.

It carries out the reaction N2 + 8 reduced [2Fe-2S]-[ferredoxin] + 16 ATP + 16 H2O = H2 + 8 oxidized [2Fe-2S]-[ferredoxin] + 2 NH4(+) + 16 ADP + 16 phosphate + 6 H(+). Functionally, the key enzymatic reactions in nitrogen fixation are catalyzed by the nitrogenase complex, which has 2 components: the iron protein and the molybdenum-iron protein. The chain is Nitrogenase iron protein from Chlorobium chlorochromatii (strain CaD3).